The sequence spans 367 residues: 3-dehydroquinate synthase (367 aa).

NAD(+) contacts are provided by residues 69 to 74 (DGEAFK), 103 to 107 (GVVGD), 127 to 128 (TT), lysine 140, lysine 149, and 167 to 170 (TLAT). Residues glutamate 182, histidine 245, and histidine 262 each contribute to the Zn(2+) site.

The protein belongs to the sugar phosphate cyclases superfamily. Dehydroquinate synthase family. The cofactor is Co(2+). It depends on Zn(2+) as a cofactor. NAD(+) is required as a cofactor.

It localises to the cytoplasm. It carries out the reaction 7-phospho-2-dehydro-3-deoxy-D-arabino-heptonate = 3-dehydroquinate + phosphate. It participates in metabolic intermediate biosynthesis; chorismate biosynthesis; chorismate from D-erythrose 4-phosphate and phosphoenolpyruvate: step 2/7. Catalyzes the conversion of 3-deoxy-D-arabino-heptulosonate 7-phosphate (DAHP) to dehydroquinate (DHQ). The protein is 3-dehydroquinate synthase of Azotobacter vinelandii (strain DJ / ATCC BAA-1303).